Here is a 694-residue protein sequence, read N- to C-terminus: Elongation factor G (694 aa).

A tr-type G domain is found at 6–288 (KLYRNIGIAA…GVIEYLPSPT (283 aa)). Residues 15 to 22 (AHVDAGKT), 86 to 90 (DTPGH), and 140 to 143 (NKMD) contribute to the GTP site.

It belongs to the TRAFAC class translation factor GTPase superfamily. Classic translation factor GTPase family. EF-G/EF-2 subfamily.

Its subcellular location is the cytoplasm. Functionally, catalyzes the GTP-dependent ribosomal translocation step during translation elongation. During this step, the ribosome changes from the pre-translocational (PRE) to the post-translocational (POST) state as the newly formed A-site-bound peptidyl-tRNA and P-site-bound deacylated tRNA move to the P and E sites, respectively. Catalyzes the coordinated movement of the two tRNA molecules, the mRNA and conformational changes in the ribosome. The chain is Elongation factor G from Legionella pneumophila (strain Paris).